Consider the following 431-residue polypeptide: Histidinol dehydrogenase (431 aa).

NAD(+) is bound by residues tyrosine 130, glutamine 191, and asparagine 214. Positions 237, 261, and 264 each coordinate substrate. Zn(2+) contacts are provided by glutamine 261 and histidine 264. Residues glutamate 329 and histidine 330 each act as proton acceptor in the active site. 4 residues coordinate substrate: histidine 330, aspartate 363, glutamate 417, and histidine 422. Aspartate 363 contacts Zn(2+). Histidine 422 contacts Zn(2+).

This sequence belongs to the histidinol dehydrogenase family. Zn(2+) serves as cofactor.

It carries out the reaction L-histidinol + 2 NAD(+) + H2O = L-histidine + 2 NADH + 3 H(+). Its pathway is amino-acid biosynthesis; L-histidine biosynthesis; L-histidine from 5-phospho-alpha-D-ribose 1-diphosphate: step 9/9. Its function is as follows. Catalyzes the sequential NAD-dependent oxidations of L-histidinol to L-histidinaldehyde and then to L-histidine. This chain is Histidinol dehydrogenase, found in Psychrobacter arcticus (strain DSM 17307 / VKM B-2377 / 273-4).